The following is a 73-amino-acid chain: Beta-1 adrenergic receptor (73 aa).

A helical membrane pass occupies residues 1-12 (ISALVSFLPILM). Topologically, residues 13-38 (HWWRAENDEARRCYNDPKCCDFVTNR) are extracellular. A disulfide bond links C25 and C31. The helical transmembrane segment at 39–64 (AYAIASSVVSFYVPLCIMAFVYLRVF) threads the bilayer. S44 contributes to the cyanopindolol binding site. The Cytoplasmic segment spans residues 65 to 73 (REAQKQVKK).

Belongs to the G-protein coupled receptor 1 family. Adrenergic receptor subfamily. ADRB1 sub-subfamily. Interacts (via C-terminus PDZ motif) with RAPGEF2; the interaction is direct. Interacts with GOPC, MAGI3 and DLG4. In terms of processing, homologous desensitization of the receptor is mediated by its phosphorylation by beta-adrenergic receptor kinase.

The protein localises to the cell membrane. It is found in the early endosome. In terms of biological role, beta-adrenergic receptors mediate the catecholamine-induced activation of adenylate cyclase through the action of G proteins. This receptor binds epinephrine and norepinephrine with approximately equal affinity. Mediates Ras activation through G(s)-alpha- and cAMP-mediated signaling. In dorsal pons neurons, involved in the regulation of sleep/wake behaviors. The sequence is that of Beta-1 adrenergic receptor (ADRB1) from Meriones unguiculatus (Mongolian jird).